Reading from the N-terminus, the 305-residue chain is GMP synthase [glutamine-hydrolyzing] subunit B (305 aa).

Residues 2–184 (VNIEKFIDQA…LGLPAEIQHR (183 aa)) form the GMPS ATP-PPase domain. Residue 29–35 (SGGVDSS) coordinates ATP.

In terms of assembly, heterodimer composed of a glutamine amidotransferase subunit (A) and a GMP-binding subunit (B).

The catalysed reaction is XMP + L-glutamine + ATP + H2O = GMP + L-glutamate + AMP + diphosphate + 2 H(+). It participates in purine metabolism; GMP biosynthesis; GMP from XMP (L-Gln route): step 1/1. Functionally, catalyzes the synthesis of GMP from XMP. The polypeptide is GMP synthase [glutamine-hydrolyzing] subunit B (Methanoculleus marisnigri (strain ATCC 35101 / DSM 1498 / JR1)).